The sequence spans 968 residues: Alanine--tRNA ligase, cytoplasmic (968 aa).

Residue M1 is modified to N-acetylmethionine. Residue S3 is modified to Phosphoserine. K19 is subject to N6-acetyllysine. Residues R77, H95, W176, and 214-216 (IWN) each bind ATP. Positions 216 and 239 each coordinate L-alanine. Residue G243 participates in ATP binding. 2 positions are modified to phosphoserine: S399 and S555. Zn(2+) contacts are provided by H605, H609, C723, and H727. Positions 750–763 (RRIVAVTGAEAQKA) match the Nuclear localization signal motif. Residue K876 is modified to N6-acetyllysine. The residue at position 943 (K943) is an N6,N6,N6-trimethyllysine; alternate. K943 bears the N6,N6-dimethyllysine; alternate mark. At K943 the chain carries N6-methyllysine; alternate.

It belongs to the class-II aminoacyl-tRNA synthetase family. Monomer. Interacts with ANKRD16; the interaction is direct. Requires Zn(2+) as cofactor. In terms of processing, ISGylated. Methylation at 'Lys-943' by METTL21C.

It is found in the cytoplasm. The protein resides in the nucleus. It carries out the reaction tRNA(Ala) + L-alanine + ATP = L-alanyl-tRNA(Ala) + AMP + diphosphate. The catalysed reaction is (S)-lactate + ATP + H(+) = (S)-lactoyl-AMP + diphosphate. It catalyses the reaction (S)-lactoyl-AMP + L-lysyl-[protein] = N(6)-[(S)-lactoyl]-L-lysyl-[protein] + AMP + 2 H(+). With respect to regulation, the protein lactyltransferase activity is inhibited by beta-alanine. In terms of biological role, catalyzes the attachment of alanine to tRNA(Ala) in a two-step reaction: alanine is first activated by ATP to form Ala-AMP and then transferred to the acceptor end of tRNA(Ala). Also edits incorrectly charged tRNA(Ala) via its editing domain. In presence of high levels of lactate, also acts as a protein lactyltransferase that mediates lactylation of lysine residues in target proteins, such as TEAD1, TP53/p53 and YAP1. Protein lactylation takes place in a two-step reaction: lactate is first activated by ATP to form lactate-AMP and then transferred to lysine residues of target proteins. Acts as an inhibitor of TP53/p53 activity by catalyzing lactylation of TP53/p53. Acts as a positive regulator of the Hippo pathway by mediating lactylation of TEAD1 and YAP1. The sequence is that of Alanine--tRNA ligase, cytoplasmic (Aars1) from Rattus norvegicus (Rat).